The primary structure comprises 260 residues: Ribosomal RNA small subunit methyltransferase A (260 aa).

S-adenosyl-L-methionine contacts are provided by L23, G48, E69, D94, and N110.

The protein belongs to the class I-like SAM-binding methyltransferase superfamily. rRNA adenine N(6)-methyltransferase family. RsmA subfamily.

Its subcellular location is the cytoplasm. It carries out the reaction adenosine(1518)/adenosine(1519) in 16S rRNA + 4 S-adenosyl-L-methionine = N(6)-dimethyladenosine(1518)/N(6)-dimethyladenosine(1519) in 16S rRNA + 4 S-adenosyl-L-homocysteine + 4 H(+). Specifically dimethylates two adjacent adenosines (A1518 and A1519) in the loop of a conserved hairpin near the 3'-end of 16S rRNA in the 30S particle. May play a critical role in biogenesis of 30S subunits. The protein is Ribosomal RNA small subunit methyltransferase A of Thermotoga neapolitana (strain ATCC 49049 / DSM 4359 / NBRC 107923 / NS-E).